Consider the following 589-residue polypeptide: MMRGVLVIMRLLCLGMLFTGCAGVPNSSAPQAIGTVERPVPSNLPKPTPGMDPDVLLREFFKATADPANRHLAARQFLTQSASNAWDDAGRALLIDHVVFVETRGAERVSATMRADILGSLSDMGVFETAEGVLPDPGPVELIKTSGGWRIDRLPNGVFLDWQQFQATYKRNTLYFADPTGKTVVPDPRYVAVLGHDQLATELVSKLLAGPRPEMAHAVRNLLAPPLRLRGPVTRADGSKSGIGRGYGGARIDLEKLSTTDPHSRQLLAAQIIWTLARADIRGPYVINADGAPLDDRFADGWTTSDVAATDPGVADGAGAGLHALVGGALVSLIGQNTTTVLGAFGRMGYQTGAALSRSGRQVASVVTLRRGAPDMAASLWIGDLGGEAVQSADGHSLSRPSWSLDDAVWVVVDTNNVLRAIPEPASGQPARIPVDSAAVASRFPGPITDLQLSRDGTRAAMVIGGQVILAGVEQTQAGQFALTYPRRLGFGLGSSVVSLSWRTGDDIVVTRTDATHPVSYVNLDGVNSDAPARGLQVPLSVIAANPSTVYVAGPQGVLQYSASVAESQQGWSEVAGLTVMGAEPVLPG.

The signal sequence occupies residues 1–20 (MMRGVLVIMRLLCLGMLFTG). The N-palmitoyl cysteine moiety is linked to residue Cys21. Cys21 carries the S-diacylglycerol cysteine lipid modification.

It belongs to the LpqB lipoprotein family.

The protein resides in the cell membrane. The protein is Lipoprotein LpqB of Mycobacterium leprae (strain TN).